A 100-amino-acid chain; its full sequence is Small ribosomal subunit protein uS14c (100 aa).

Belongs to the universal ribosomal protein uS14 family. Part of the 30S ribosomal subunit.

It localises to the plastid. The protein resides in the chloroplast. In terms of biological role, binds 16S rRNA, required for the assembly of 30S particles. This is Small ribosomal subunit protein uS14c from Vitis vinifera (Grape).